The chain runs to 122 residues: Large ribosomal subunit protein uL18 (122 aa).

It belongs to the universal ribosomal protein uL18 family. As to quaternary structure, part of the 50S ribosomal subunit; part of the 5S rRNA/L5/L18/L25 subcomplex. Contacts the 5S and 23S rRNAs.

This is one of the proteins that bind and probably mediate the attachment of the 5S RNA into the large ribosomal subunit, where it forms part of the central protuberance. In Leptospira borgpetersenii serovar Hardjo-bovis (strain JB197), this protein is Large ribosomal subunit protein uL18.